A 632-amino-acid chain; its full sequence is Probable potassium transport system protein Kup (632 aa).

12 consecutive transmembrane segments (helical) span residues L17–L37, L60–L80, T106–I126, L146–S166, F175–I195, A210–L230, W254–L274, A292–I312, I344–F364, L370–F390, L401–A421, and I426–T446.

This sequence belongs to the HAK/KUP transporter (TC 2.A.72) family.

Its subcellular location is the cell inner membrane. The enzyme catalyses K(+)(in) + H(+)(in) = K(+)(out) + H(+)(out). In terms of biological role, transport of potassium into the cell. Likely operates as a K(+):H(+) symporter. This chain is Probable potassium transport system protein Kup, found in Rhizobium rhizogenes (Agrobacterium rhizogenes).